The chain runs to 227 residues: NADH-quinone oxidoreductase subunit C (227 aa).

The protein belongs to the complex I 30 kDa subunit family. In terms of assembly, NDH-1 is composed of 14 different subunits. Subunits NuoB, C, D, E, F, and G constitute the peripheral sector of the complex.

The protein resides in the cell inner membrane. The enzyme catalyses a quinone + NADH + 5 H(+)(in) = a quinol + NAD(+) + 4 H(+)(out). In terms of biological role, NDH-1 shuttles electrons from NADH, via FMN and iron-sulfur (Fe-S) centers, to quinones in the respiratory chain. The immediate electron acceptor for the enzyme in this species is believed to be ubiquinone. Couples the redox reaction to proton translocation (for every two electrons transferred, four hydrogen ions are translocated across the cytoplasmic membrane), and thus conserves the redox energy in a proton gradient. The protein is NADH-quinone oxidoreductase subunit C of Legionella pneumophila subsp. pneumophila (strain Philadelphia 1 / ATCC 33152 / DSM 7513).